The following is a 192-amino-acid chain: MARFGADESWIACEIHMKTPPRRFIVEFKQARRRSKERTNSVWGNTDLKALTREVEEMAPHLFNLTEEPVSPNVAYGPPASPNAEFLIADKENIGLGPEAVTPAEGSENAFSGLLQETPPVSHTRTNSKQRISRKLPERLSLDVRENVERPISRGELATLEAENKRLKRLLAERILTQNLQLKKMLDRFNLN.

To R.meliloti RA0936 and y4nF.

This is an uncharacterized protein from Sinorhizobium fredii (strain NBRC 101917 / NGR234).